Consider the following 195-residue polypeptide: UPF0314 protein RHE_CH03951 (195 aa).

A run of 4 helical transmembrane segments spans residues 14-34 (AFWF…EYLM), 64-84 (WYTP…YLIL), 128-148 (DSIL…FFAA), and 150-170 (APVA…GYVI).

Belongs to the UPF0314 family.

The protein localises to the cell membrane. This is UPF0314 protein RHE_CH03951 from Rhizobium etli (strain ATCC 51251 / DSM 11541 / JCM 21823 / NBRC 15573 / CFN 42).